The sequence spans 546 residues: Glucose-6-phosphate isomerase (546 aa).

Catalysis depends on E357, which acts as the Proton donor. Residues H389 and K509 contribute to the active site.

Belongs to the GPI family.

The protein localises to the cytoplasm. It carries out the reaction alpha-D-glucose 6-phosphate = beta-D-fructose 6-phosphate. It participates in carbohydrate biosynthesis; gluconeogenesis. The protein operates within carbohydrate degradation; glycolysis; D-glyceraldehyde 3-phosphate and glycerone phosphate from D-glucose: step 2/4. Its function is as follows. Catalyzes the reversible isomerization of glucose-6-phosphate to fructose-6-phosphate. This is Glucose-6-phosphate isomerase from Anaeromyxobacter sp. (strain K).